Consider the following 134-residue polypeptide: Profilin-3 (134 aa).

A disulfide bridge connects residues cysteine 13 and cysteine 118. The short motif at 84 to 100 (AVIRGKKGSGGITSKKT) is the Involved in PIP2 interaction element. Threonine 114 carries the phosphothreonine modification.

Belongs to the profilin family. In terms of assembly, occurs in many kinds of cells as a complex with monomeric actin in a 1:1 ratio. In terms of processing, phosphorylated by MAP kinases.

The protein localises to the cytoplasm. Its subcellular location is the cytoskeleton. Binds to actin and affects the structure of the cytoskeleton. At high concentrations, profilin prevents the polymerization of actin, whereas it enhances it at low concentrations. The sequence is that of Profilin-3 from Olea europaea (Common olive).